Consider the following 230-residue polypeptide: MTKHQFKLSDPRLLSRIGYQFKQPELLQLALTHRSVSHKYNYERLEFLGDSLLGMIIANYLYHAYPHENEGRLTRMRATLVRQEALGKIATDLQLSRCLILSTGELKSGGHHRESILADTVEAIIGAIYLDSSDLNLLKDIVLKWYTPYLDHIEPTDQLKDPKSRLQEYLQARKKPLPVYEVVDIQGDAPHQHFKVECLVDGLSKIHGEGSSRRFAEQAAAAEILKLLEQ.

Residues 10 to 133 (DPRLLSRIGY…IIGAIYLDSS (124 aa)) form the RNase III domain. Position 46 (Glu-46) interacts with Mg(2+). Residue Asp-50 is part of the active site. Asp-119 and Glu-122 together coordinate Mg(2+). Glu-122 is a catalytic residue. One can recognise a DRBM domain in the interval 161–230 (DPKSRLQEYL…AAEILKLLEQ (70 aa)).

The protein belongs to the ribonuclease III family. As to quaternary structure, homodimer. It depends on Mg(2+) as a cofactor.

It localises to the cytoplasm. The enzyme catalyses Endonucleolytic cleavage to 5'-phosphomonoester.. In terms of biological role, digests double-stranded RNA. Involved in the processing of primary rRNA transcript to yield the immediate precursors to the large and small rRNAs (23S and 16S). Processes some mRNAs, and tRNAs when they are encoded in the rRNA operon. Processes pre-crRNA and tracrRNA of type II CRISPR loci if present in the organism. This is Ribonuclease 3 (rnc) from Acinetobacter baumannii (strain AB307-0294).